A 271-amino-acid chain; its full sequence is Small ribosomal subunit protein uS2 (271 aa).

The tract at residues 235 to 271 (FDAKNPLKPQNYNAPNKRPYQDSPRKPSYQNQNQNQI) is disordered. Residues 262–271 (SYQNQNQNQI) are compositionally biased toward polar residues.

This sequence belongs to the universal ribosomal protein uS2 family.

The chain is Small ribosomal subunit protein uS2 from Onion yellows phytoplasma (strain OY-M).